An 806-amino-acid chain; its full sequence is Leucine--tRNA ligase (806 aa).

The 'HIGH' region motif lies at 40-51; sequence PYPSGKGLHVGH. The short motif at 580–584 is the 'KMSKS' region element; sequence KMSKS. Lys583 provides a ligand contact to ATP.

It belongs to the class-I aminoacyl-tRNA synthetase family.

It localises to the cytoplasm. It carries out the reaction tRNA(Leu) + L-leucine + ATP = L-leucyl-tRNA(Leu) + AMP + diphosphate. This is Leucine--tRNA ligase from Ureaplasma urealyticum serovar 10 (strain ATCC 33699 / Western).